We begin with the raw amino-acid sequence, 245 residues long: Large ribosomal subunit protein uL3 (245 aa).

N5-methylglutamine is present on Gln-152. A disordered region spans residues Arg-224–Asn-245. Over residues Ala-230–Asn-245 the composition is skewed to low complexity.

Belongs to the universal ribosomal protein uL3 family. In terms of assembly, part of the 50S ribosomal subunit. Forms a cluster with proteins L14 and L19. In terms of processing, methylated by PrmB.

One of the primary rRNA binding proteins, it binds directly near the 3'-end of the 23S rRNA, where it nucleates assembly of the 50S subunit. In Paracoccus denitrificans (strain Pd 1222), this protein is Large ribosomal subunit protein uL3.